Reading from the N-terminus, the 425-residue chain is 3-isopropylmalate dehydratase large subunit (425 aa).

The [4Fe-4S] cluster site is built by Cys305, Cys365, and Cys368.

It belongs to the aconitase/IPM isomerase family. LeuC type 2 subfamily. As to quaternary structure, heterodimer of LeuC and LeuD. [4Fe-4S] cluster is required as a cofactor.

The enzyme catalyses (2R,3S)-3-isopropylmalate = (2S)-2-isopropylmalate. Its pathway is amino-acid biosynthesis; L-leucine biosynthesis; L-leucine from 3-methyl-2-oxobutanoate: step 2/4. Functionally, catalyzes the isomerization between 2-isopropylmalate and 3-isopropylmalate, via the formation of 2-isopropylmaleate. The polypeptide is 3-isopropylmalate dehydratase large subunit (Clostridioides difficile (strain 630) (Peptoclostridium difficile)).